A 314-amino-acid chain; its full sequence is Oxaloacetate tautomerase FAHD2B, mitochondrial (314 aa).

The N-terminal 84 residues, M1–L84, are a transit peptide targeting the mitochondrion. Mg(2+) is bound by residues E159, E161, and D190.

It belongs to the FAH family. Requires Mg(2+) as cofactor. The cofactor is Mn(2+).

The protein resides in the mitochondrion. The catalysed reaction is oxaloacetate = enol-oxaloacetate. Functionally, tautomerase that converts enol-oxaloacetate, a strong inhibitor of succinate dehydrogenase, to the physiological keto form of oxaloacetate. It is thereby required to maximize aerobic respiration efficiency by preventing succinate dehydrogenase inhibition. The polypeptide is Oxaloacetate tautomerase FAHD2B, mitochondrial (Homo sapiens (Human)).